Consider the following 78-residue polypeptide: Large ribosomal subunit protein bL28 (78 aa).

The interval 1 to 20 (MSRVCQVTGKGPVTGNNISH) is disordered.

Belongs to the bacterial ribosomal protein bL28 family.

In Pseudomonas putida (strain W619), this protein is Large ribosomal subunit protein bL28.